Consider the following 671-residue polypeptide: MALSVNDCARLTGQSVPTMEHFLPLRNIWNRVRDFPRASTTAAGITWMSRYIYGYHRLMLEDLAPGAPATLRWPLYRQPPPHFLVGYQYLVRTCNDYVFDSRAYSRLRYTELSQPGHQTVNWSVMANCTYTINTGAYHRFVDMDDFQSTLTQVQQAILAERVVADLALLQPMRGFGVTRMGGRGRHLRPNSAAAVAIDARDAGQEEGEEEVPVERLMQDYYKDLRRCQNEAWGMADRLRIQQAGPKDMVLLSTIRRLKTAYFNYIISSTSARNNPDRHPLPPATVLSLPCDCDWLDAFLERFSDPVDADSLRSLGGGVPTQQLLRCIVSAVSLPHGSPPPTHNRDMTGGVFQLRPRENGRAVTETMRRRRGEMIERFVDRLPVRRRRRRVPPPPPPPEEEEEGEALMEEEIEEEEAPVAFEREVRDTVAELIRLLEEELTVSARNSQFFNFAVDFYEAMERLEALGDINESTLRRWVMYFFVAEHTATTLNYLFQRLRNYAVFARHVELNLAQVVMRARDAEGGVVYSRVWNEGGLNAFSQLMARISNDLAATVERAGRGDLQEEEIEQFMAEIAYQDNSGDVQEILRQAAVNDTEIDSVELSFRFKLTGPVVFTQRRQIQEINRRVVAFASNLRAQHQLLPARGADVPLPPLPAGPEPPLPPGARPRHRF.

The Nuclear localization signal motif lies at 380–389 (RLPVRRRRRR). Residues 386–409 (RRRRVPPPPPPPEEEEEGEALMEE) form a disordered region. The span at 397–409 (PEEEEEGEALMEE) shows a compositional bias: acidic residues. Position 580 is an O-(5'-phospho-DNA)-serine (serine 580). Residues 645–671 (GADVPLPPLPAGPEPPLPPGARPRHRF) are disordered. Residues 649–665 (PLPPLPAGPEPPLPPGA) show a composition bias toward pro residues.

This sequence belongs to the adenoviridae terminal protein family. As to quaternary structure, heterodimer with the polymerase; this heterodimer binds to bp 9 to 18 of the genome. Interacts with host POU2F1; POU2F1 binds to the auxiliary sequences in the inverted terminal repeats and tethers the pTP-POL heterodimer to the origin DNA thereby participating in the assembly of the pre-initiation complex (POL-TP-DBP-NFIA-POU2F1). Preterminal protein is used to replicate viral genome, upon genomic encapsidation it is processed first into iTP and finally into TP by adenovirus protease.

It localises to the host nucleus matrix. Protein covalently bound to the viral DNA that acts as a primer for viral genomic replication by DNA strand displacement. Assembles on the viral origin of replication in an initiation complex with viral polymerase, DBP, host NFIA and host POU2F1/OCT1. During initiation, the polymerase covalently couples the first dCTP with Ser-580 of pTP. The terminal protein stimulates the template activity over 20 fold compared to protein-free templates. Neo-synthesized viral genomes are linked to two preterminal proteins, one for each 5' end. These new genomes are encapsidated in the nucleus, and during capsid maturation by viral protease, preterminal protein is first cleaved into intermediary (iTP), then into mature TP. May play a role in host nuclear matrix localization of genomic DNA. In Homo sapiens (Human), this protein is Preterminal protein.